The following is a 262-amino-acid chain: Tryptophan synthase alpha chain (262 aa).

Residues glutamate 48 and aspartate 59 each act as proton acceptor in the active site.

Belongs to the TrpA family. Tetramer of two alpha and two beta chains.

It catalyses the reaction (1S,2R)-1-C-(indol-3-yl)glycerol 3-phosphate + L-serine = D-glyceraldehyde 3-phosphate + L-tryptophan + H2O. The protein operates within amino-acid biosynthesis; L-tryptophan biosynthesis; L-tryptophan from chorismate: step 5/5. Functionally, the alpha subunit is responsible for the aldol cleavage of indoleglycerol phosphate to indole and glyceraldehyde 3-phosphate. The polypeptide is Tryptophan synthase alpha chain (Helicobacter pylori (strain G27)).